Consider the following 231-residue polypeptide: Septum site-determining protein MinC (231 aa).

The protein belongs to the MinC family. In terms of assembly, interacts with MinD and FtsZ.

Functionally, cell division inhibitor that blocks the formation of polar Z ring septums. Rapidly oscillates between the poles of the cell to destabilize FtsZ filaments that have formed before they mature into polar Z rings. Prevents FtsZ polymerization. This is Septum site-determining protein MinC from Shigella flexneri.